The sequence spans 607 residues: Terpenoid synthase 29 (607 aa).

Mg(2+) is bound by residues D358, D362, N502, T506, and E510. The short motif at 358-362 (DDTYD) is the DDXXD motif element.

It belongs to the terpene synthase family. Tpsa subfamily. The cofactor is Mg(2+). Mn(2+) is required as a cofactor. As to expression, predominantly expressed in flowers but also in siliques, roots, leaves and stems.

The protein resides in the cytoplasm. The protein operates within secondary metabolite biosynthesis; terpenoid biosynthesis. The sequence is that of Terpenoid synthase 29 (TPS29) from Arabidopsis thaliana (Mouse-ear cress).